A 144-amino-acid chain; its full sequence is MIKLESLQDPSPRKRRKKLLGRGPGSGHGKTSGRGHKGDGSRSGYKRRFGYEGGGVPLYRRVPTRGFSHARFDECVEEITTQRLNSLFNEGEEITLDALKQKKAIDKHAIRVKVIVKGELEKTFIWKDANVVLSQGVRNLIGVA.

The disordered stretch occupies residues 1–52; it reads MIKLESLQDPSPRKRRKKLLGRGPGSGHGKTSGRGHKGDGSRSGYKRRFGYE. Residues 22–32 are compositionally biased toward gly residues; the sequence is RGPGSGHGKTS.

The protein belongs to the universal ribosomal protein uL15 family. In terms of assembly, part of the 50S ribosomal subunit.

Its function is as follows. Binds to the 23S rRNA. This is Large ribosomal subunit protein uL15 from Chlamydia felis (strain Fe/C-56) (Chlamydophila felis).